The chain runs to 110 residues: Chorion class B protein M2410 (110 aa).

4 repeat units span residues 1-4, 5-9, 10-14, and 15-19. The interval 1-19 is 4 X 5 AA tandem repeats of G-Y-G-G-L; it reads YGGLGYGGLGYGGLGYGGL. A left arm region spans residues 1–27; that stretch reads YGGLGYGGLGYGGLGYGGLGGGCGRGF. The tract at residues 28–96 is central domain; the sequence is SGGGLPVATA…GNGDVGITRE (69 aa). The interval 97-110 is right arm (Gly-rich tandem repeats); that stretch reads GGLGYGAGYGGGYG.

This sequence belongs to the chorion protein family.

Functionally, this protein is one of many from the eggshell of the silk moth. This chain is Chorion class B protein M2410, found in Bombyx mori (Silk moth).